Consider the following 250-residue polypeptide: Small ribosomal subunit protein uS3 (250 aa).

Residues 39–107 (VREFLTKKLK…PAQVSINEID (69 aa)) form the KH type-2 domain. Residues 215–250 (MNPAPAEERPAKRGRGRGEGQERRGRRGDRAADKGE) are disordered. Positions 220–250 (AEERPAKRGRGRGEGQERRGRRGDRAADKGE) are enriched in basic and acidic residues.

This sequence belongs to the universal ribosomal protein uS3 family. As to quaternary structure, part of the 30S ribosomal subunit. Forms a tight complex with proteins S10 and S14.

Its function is as follows. Binds the lower part of the 30S subunit head. Binds mRNA in the 70S ribosome, positioning it for translation. The sequence is that of Small ribosomal subunit protein uS3 from Acinetobacter baumannii (strain SDF).